Here is a 557-residue protein sequence, read N- to C-terminus: Dihydroxy-acid dehydratase (557 aa).

D78 contacts Mg(2+). C119 contributes to the [2Fe-2S] cluster binding site. Mg(2+)-binding residues include D120 and K121. The residue at position 121 (K121) is an N6-carboxylysine. [2Fe-2S] cluster is bound at residue C192. E442 contacts Mg(2+). S468 (proton acceptor) is an active-site residue.

The protein belongs to the IlvD/Edd family. As to quaternary structure, homodimer. The cofactor is [2Fe-2S] cluster. Mg(2+) serves as cofactor.

It carries out the reaction (2R)-2,3-dihydroxy-3-methylbutanoate = 3-methyl-2-oxobutanoate + H2O. It catalyses the reaction (2R,3R)-2,3-dihydroxy-3-methylpentanoate = (S)-3-methyl-2-oxopentanoate + H2O. The protein operates within amino-acid biosynthesis; L-isoleucine biosynthesis; L-isoleucine from 2-oxobutanoate: step 3/4. It functions in the pathway amino-acid biosynthesis; L-valine biosynthesis; L-valine from pyruvate: step 3/4. In terms of biological role, functions in the biosynthesis of branched-chain amino acids. Catalyzes the dehydration of (2R,3R)-2,3-dihydroxy-3-methylpentanoate (2,3-dihydroxy-3-methylvalerate) into 2-oxo-3-methylpentanoate (2-oxo-3-methylvalerate) and of (2R)-2,3-dihydroxy-3-methylbutanoate (2,3-dihydroxyisovalerate) into 2-oxo-3-methylbutanoate (2-oxoisovalerate), the penultimate precursor to L-isoleucine and L-valine, respectively. The chain is Dihydroxy-acid dehydratase from Bacillus cytotoxicus (strain DSM 22905 / CIP 110041 / 391-98 / NVH 391-98).